We begin with the raw amino-acid sequence, 317 residues long: Glycerol-3-phosphate dehydrogenase [NAD(P)+] (317 aa).

The NADPH site is built by S14, F15, R35, and K109. The sn-glycerol 3-phosphate site is built by K109 and G137. An NADPH-binding site is contributed by A141. 5 residues coordinate sn-glycerol 3-phosphate: K192, D248, S258, R259, and N260. Catalysis depends on K192, which acts as the Proton acceptor. R259 contacts NADPH. Residues L283 and E285 each coordinate NADPH.

This sequence belongs to the NAD-dependent glycerol-3-phosphate dehydrogenase family.

The protein resides in the cytoplasm. The enzyme catalyses sn-glycerol 3-phosphate + NAD(+) = dihydroxyacetone phosphate + NADH + H(+). It catalyses the reaction sn-glycerol 3-phosphate + NADP(+) = dihydroxyacetone phosphate + NADPH + H(+). It participates in membrane lipid metabolism; glycerophospholipid metabolism. Its function is as follows. Catalyzes the reduction of the glycolytic intermediate dihydroxyacetone phosphate (DHAP) to sn-glycerol 3-phosphate (G3P), the key precursor for phospholipid synthesis. This chain is Glycerol-3-phosphate dehydrogenase [NAD(P)+], found in Rickettsia akari (strain Hartford).